Reading from the N-terminus, the 924-residue chain is WSC domain-containing protein ARB_07867 (924 aa).

Positions 1–24 are cleaved as a signal peptide; the sequence is MAGILSVVHIIIIFIVRFKSSTDS. The region spanning 62-160 is the WSC 1 domain; the sequence is TWTYLGCYTD…PGRLNLYQNT (99 aa). N-linked (GlcNAc...) asparagine glycosylation is present at N90. The disordered stretch occupies residues 166-190; it reads DTMTTSAPSTETGSPTTTSVPEPTQ. The segment covering 169-189 has biased composition (low complexity); it reads TTSAPSTETGSPTTTSVPEPT. One can recognise a WSC 2 domain in the interval 195-289; the sequence is GWQYSGCYQD…PSRLSVYSKG (95 aa). 7 N-linked (GlcNAc...) asparagine glycosylation sites follow: N290, N333, N387, N455, N552, N758, and N833. Residues 307-404 enclose the WSC 3 domain; it reads GWKYQGCLQD…GNLITYYRWM (98 aa).

It is found in the secreted. The protein is WSC domain-containing protein ARB_07867 of Arthroderma benhamiae (strain ATCC MYA-4681 / CBS 112371) (Trichophyton mentagrophytes).